The primary structure comprises 730 residues: Multifunctional procollagen lysine hydroxylase and glycosyltransferase (730 aa).

Residues 1-16 (MRVLPFLLPLIPVLLA) form the signal peptide. Residues 20-280 (TDLPELVVVT…CGLEVKESEE (261 aa)) form a required for glycosyltransferase activity region. UDP is bound by residues 30 to 32 (VAT) and 98 to 100 (DAY). Mn(2+)-binding residues include Asp-98, Asp-101, and His-242. Residue 245–248 (GPSK) participates in UDP binding. The cysteines at positions 268 and 271 are disulfide-linked. The segment at 281-507 (VPLIALNLFI…YYGFLIVSDE (227 aa)) is accessory region. Cys-554 and Cys-690 are oxidised to a cystine. 2-oxoglutarate is bound by residues Arg-590 and Tyr-648. The Fe2OG dioxygenase domain maps to 639–730 (ESNMMFVVRY…RYIMVSFINP (92 aa)). Fe cation-binding residues include His-659 and Asp-661. An important for dimerization region spans residues 664–707 (TFSIDIALNKKGRDYEGGGVRYIRYNCTVPADEVGYAMMFPGRL). A glycan (N-linked (GlcNAc...) asparagine) is linked at Asn-689. Position 711 (His-711) interacts with Fe cation. Arg-721 contributes to the 2-oxoglutarate binding site.

In terms of assembly, homodimer. Requires Fe(2+) as cofactor. The cofactor is L-ascorbate. Mn(2+) serves as cofactor.

Its subcellular location is the rough endoplasmic reticulum. It is found in the endoplasmic reticulum lumen. The protein resides in the endoplasmic reticulum membrane. The protein localises to the secreted. It localises to the extracellular space. The catalysed reaction is L-lysyl-[collagen] + 2-oxoglutarate + O2 = (5R)-5-hydroxy-L-lysyl-[collagen] + succinate + CO2. The enzyme catalyses (5R)-5-hydroxy-L-lysyl-[collagen] + UDP-alpha-D-galactose = (5R)-5-O-(beta-D-galactosyl)-5-hydroxy-L-lysyl-[collagen] + UDP + H(+). It carries out the reaction (5R)-5-O-(beta-D-galactosyl)-5-hydroxy-L-lysyl-[collagen] + UDP-alpha-D-glucose = (5R)-5-O-[alpha-D-glucosyl-(1-&gt;2)-beta-D-galactosyl]-5-hydroxy-L-lysyl-[collagen] + UDP + H(+). Its function is as follows. Multifunctional enzyme that catalyzes a series of post-translational modifications on Lys residues in procollagen. Catalyzes the formation of hydroxylysine residues in -Xaa-Lys-Gly- sequences in type IV collagens. Transfers galactose onto hydroxylysine groups, giving rise to galactosyl 5-hydroxylysine. Catalyzes the subsequent transfer of glucose moieties, giving rise to 1,2-glucosylgalactosyl-5-hydroxylysine residues. Essential for normal biosynthesis and secretion of type IV collagens. Essential for normal stability of the basement membrane. This is Multifunctional procollagen lysine hydroxylase and glycosyltransferase (let-268) from Caenorhabditis elegans.